We begin with the raw amino-acid sequence, 275 residues long: Glucan endo-1,3-beta-glucosidase, acidic isoform PR-N (275 aa).

Glutamate 196 (nucleophile) is an active-site residue.

The protein belongs to the glycosyl hydrolase 17 family. The N-terminus is blocked.

The protein localises to the secreted. It localises to the extracellular space. It catalyses the reaction Hydrolysis of (1-&gt;3)-beta-D-glucosidic linkages in (1-&gt;3)-beta-D-glucans.. Implicated in the defense of plants against pathogens. The chain is Glucan endo-1,3-beta-glucosidase, acidic isoform PR-N (PRN) from Nicotiana tabacum (Common tobacco).